Here is a 432-residue protein sequence, read N- to C-terminus: Dihydroorotase (432 aa).

Residues His-60 and His-62 each contribute to the Zn(2+) site. Substrate is bound by residues 62–64 and Asn-94; that span reads HLR. Zn(2+)-binding residues include Asp-152, His-179, and His-232. Asn-278 is a binding site for substrate. Asp-305 serves as a coordination point for Zn(2+). Residue Asp-305 is part of the active site. Residues His-309 and 323 to 324 each bind substrate; that span reads FG.

The protein belongs to the metallo-dependent hydrolases superfamily. DHOase family. Class I DHOase subfamily. Zn(2+) serves as cofactor.

The enzyme catalyses (S)-dihydroorotate + H2O = N-carbamoyl-L-aspartate + H(+). It functions in the pathway pyrimidine metabolism; UMP biosynthesis via de novo pathway; (S)-dihydroorotate from bicarbonate: step 3/3. In terms of biological role, catalyzes the reversible cyclization of carbamoyl aspartate to dihydroorotate. In Elusimicrobium minutum (strain Pei191), this protein is Dihydroorotase.